Reading from the N-terminus, the 249-residue chain is Imidazole glycerol phosphate synthase subunit HisF (249 aa).

Catalysis depends on residues D11 and D130.

The protein belongs to the HisA/HisF family. Heterodimer of HisH and HisF.

It is found in the cytoplasm. The catalysed reaction is 5-[(5-phospho-1-deoxy-D-ribulos-1-ylimino)methylamino]-1-(5-phospho-beta-D-ribosyl)imidazole-4-carboxamide + L-glutamine = D-erythro-1-(imidazol-4-yl)glycerol 3-phosphate + 5-amino-1-(5-phospho-beta-D-ribosyl)imidazole-4-carboxamide + L-glutamate + H(+). The protein operates within amino-acid biosynthesis; L-histidine biosynthesis; L-histidine from 5-phospho-alpha-D-ribose 1-diphosphate: step 5/9. Functionally, IGPS catalyzes the conversion of PRFAR and glutamine to IGP, AICAR and glutamate. The HisF subunit catalyzes the cyclization activity that produces IGP and AICAR from PRFAR using the ammonia provided by the HisH subunit. This Sulfolobus acidocaldarius (strain ATCC 33909 / DSM 639 / JCM 8929 / NBRC 15157 / NCIMB 11770) protein is Imidazole glycerol phosphate synthase subunit HisF.